The sequence spans 91 residues: Early E3B 10.4 kDa protein (91 aa).

The signal sequence occupies residues 1–21 (MVTVLLIFLCLPVIFSSSTFA). Residues 22–33 (AVSDLDPECLAP) lie on the Lumenal side of the membrane. A helical transmembrane segment spans residues 34 to 56 (FAVYLIFTFVTATCVCSIITLLI). Topologically, residues 57-91 (TSLQFFDYYYVRIVYRRHHPRYQNPQIAALLQLQP) are cytoplasmic.

It belongs to the adenoviridae E3B family.

The protein localises to the host endoplasmic reticulum membrane. Functionally, down-regulates the EGF receptor. The sequence is that of Early E3B 10.4 kDa protein from Homo sapiens (Human).